An 824-amino-acid polypeptide reads, in one-letter code: Leucine--tRNA ligase (824 aa).

The 'HIGH' region signature appears at Pro-41–His-51. Positions Lys-580 to Ser-584 match the 'KMSKS' region motif. Lys-583 is an ATP binding site.

It belongs to the class-I aminoacyl-tRNA synthetase family.

The protein resides in the cytoplasm. It carries out the reaction tRNA(Leu) + L-leucine + ATP = L-leucyl-tRNA(Leu) + AMP + diphosphate. This chain is Leucine--tRNA ligase, found in Thermotoga petrophila (strain ATCC BAA-488 / DSM 13995 / JCM 10881 / RKU-1).